We begin with the raw amino-acid sequence, 160 residues long: Cyclic pyranopterin monophosphate synthase (160 aa).

Residues 77-79 (LCH) and 115-116 (ME) contribute to the substrate site. Aspartate 130 is a catalytic residue.

It belongs to the MoaC family. In terms of assembly, homohexamer; trimer of dimers.

It carries out the reaction (8S)-3',8-cyclo-7,8-dihydroguanosine 5'-triphosphate = cyclic pyranopterin phosphate + diphosphate. The protein operates within cofactor biosynthesis; molybdopterin biosynthesis. Catalyzes the conversion of (8S)-3',8-cyclo-7,8-dihydroguanosine 5'-triphosphate to cyclic pyranopterin monophosphate (cPMP). This chain is Cyclic pyranopterin monophosphate synthase, found in Parvibaculum lavamentivorans (strain DS-1 / DSM 13023 / NCIMB 13966).